The following is a 254-amino-acid chain: Ribonuclease PH (254 aa).

Residues Arg-90 and Gly-128–Arg-130 each bind phosphate.

Belongs to the RNase PH family. In terms of assembly, homohexameric ring arranged as a trimer of dimers.

It catalyses the reaction tRNA(n+1) + phosphate = tRNA(n) + a ribonucleoside 5'-diphosphate. Its function is as follows. Phosphorolytic 3'-5' exoribonuclease that plays an important role in tRNA 3'-end maturation. Removes nucleotide residues following the 3'-CCA terminus of tRNAs; can also add nucleotides to the ends of RNA molecules by using nucleoside diphosphates as substrates, but this may not be physiologically important. Probably plays a role in initiation of 16S rRNA degradation (leading to ribosome degradation) during starvation. The sequence is that of Ribonuclease PH from Corynebacterium kroppenstedtii (strain DSM 44385 / JCM 11950 / CIP 105744 / CCUG 35717).